The primary structure comprises 101 residues: NAD(P)H-quinone oxidoreductase subunit 4L, chloroplastic (101 aa).

The next 3 helical transmembrane spans lie at 2–22 (ILEHVLVLSAYLFLIGLYGLI), 32–52 (MCLELILNAVNMNFVTFSDFF), and 61–81 (IFCIFVIAIAAAEAAIGLAIV).

It belongs to the complex I subunit 4L family. In terms of assembly, NDH is composed of at least 16 different subunits, 5 of which are encoded in the nucleus.

The protein localises to the plastid. The protein resides in the chloroplast thylakoid membrane. The catalysed reaction is a plastoquinone + NADH + (n+1) H(+)(in) = a plastoquinol + NAD(+) + n H(+)(out). The enzyme catalyses a plastoquinone + NADPH + (n+1) H(+)(in) = a plastoquinol + NADP(+) + n H(+)(out). Functionally, NDH shuttles electrons from NAD(P)H:plastoquinone, via FMN and iron-sulfur (Fe-S) centers, to quinones in the photosynthetic chain and possibly in a chloroplast respiratory chain. The immediate electron acceptor for the enzyme in this species is believed to be plastoquinone. Couples the redox reaction to proton translocation, and thus conserves the redox energy in a proton gradient. The chain is NAD(P)H-quinone oxidoreductase subunit 4L, chloroplastic from Crucihimalaya wallichii (Rock-cress).